A 145-amino-acid chain; its full sequence is Small ribosomal subunit protein uS19 (145 aa).

Position 2 is an N-acetylalanine (A2). K108 participates in a covalent cross-link: Glycyl lysine isopeptide (Lys-Gly) (interchain with G-Cter in SUMO2).

Belongs to the universal ribosomal protein uS19 family. As to quaternary structure, component of the small ribosomal subunit.

It localises to the cytoplasm. Functionally, component of the small ribosomal subunit. The ribosome is a large ribonucleoprotein complex responsible for the synthesis of proteins in the cell. This chain is Small ribosomal subunit protein uS19 (RPS15), found in Bos taurus (Bovine).